Consider the following 1836-residue polypeptide: InaD-like protein (1836 aa).

One can recognise an L27 domain in the interval 1–65 (MPENPAAEKM…SIKQLKGQLS (65 aa)). 3 consecutive PDZ domains span residues 134 to 221 (YIDI…AREV), 248 to 328 (DVEL…ARDP), and 365 to 453 (NVEL…VRRK). 3 positions are modified to phosphoserine: S455, S459, and S482. Over residues 456–466 (LSASPFEQPSS) the composition is skewed to polar residues. The segment at 456–492 (LSASPFEQPSSREAVAEPPEVPELTGSLKPETNSRME) is disordered. Residues 555–641 (DEELQKYSKL…PFTLVCCRRL (87 aa)) enclose the PDZ 4 domain. Position 647 is a phosphoserine (S647). PDZ domains lie at 687–773 (TVEL…ICKP) and 1074–1166 (PRIV…VVQS). The span at 1173–1191 (VIPSVNNKGKTPPQNQDQN) shows a compositional bias: polar residues. Residues 1173–1232 (VIPSVNNKGKTPPQNQDQNTQEKKAKRHGTAPPPMKLPPPYRAPSADTEESEEDSALTDK) are disordered. Over residues 1203 to 1214 (APPPMKLPPPYR) the composition is skewed to pro residues. S1217 carries the phosphoserine modification. Positions 1219–1228 (DTEESEEDSA) are enriched in acidic residues. The 84-residue stretch at 1245 to 1328 (LHIIELEKDK…PTRVKLVFIR (84 aa)) folds into the PDZ 7 domain. Residues 1341–1448 (FPVPSHSPSP…ADVTGSGNFQ (108 aa)) form a disordered region. Over residues 1372-1383 (PLPERESSKPED) the composition is skewed to basic and acidic residues. Polar residues-rich tracts occupy residues 1415-1426 (YSAQVSSSSQEI) and 1434-1448 (CQST…GNFQ). PDZ domains are found at residues 1472–1555 (EMII…VIYR) and 1568–1650 (VFLV…EIGR). T1545 bears the Phosphothreonine mark. The tract at residues 1657-1678 (ASSRKTSQNSQGDQHSAHSSCR) is disordered. The 87-residue stretch at 1709-1795 (PRTVEIIREL…FGRIILQVVA (87 aa)) folds into the PDZ 10 domain. Positions 1813-1836 (SQLGSPTADRHPQDPEELLQRTAD) are disordered.

Forms a ternary complex with PALS1 and CRB1. Component of a complex whose core is composed of ARHGAP17, AMOT, PALS1, INADL/PATJ and PARD3/PAR3. Forms a heterotrimeric complex composed of MMP5, LIN7B and PATJ; the N-terminal L27 domain of PALS1 interacts with the L27 domain of PATJ and the C-terminal L27 domain of PALS1 interacts with the L27 domain of LIN7B. Component of a complex composed of CRB3, PALS1 and PATJ. As part of the Crumbs complex; interacts with WWP1, the interaction is enhanced by AMOTL2 and facilitates WWP1 localization to the plasma membrane. The Crumbs complex promotes monoubiquitination of AMOTL2 by WWP1, which activates the Hippo signaling pathway. Interacts (via N-terminus) with PALS1/PALS (via PDZ domain). Interacts with TJP3/ZO-3 and CLDN1/claudin-1. Interacts with ASIC3, KCNJ10, KCNJ15, GRIN2A, GRIN2B, GRIN2C, GRIN2D, NLGN2, and HTR2A. Interacts with MPP7. Directly interacts with HTR4. Interacts (via PDZ domain 8) with WWC1 (via the ADDV motif). Interacts with SLC6A4. Interacts (via C-terminus) with ARHGEF18. Interacts with NPHP1. Interacts with PARD3/PAR3. Interacts (via PDZ1-6 domains) with TJP1/ZO1; the interaction is required for attachment and extension of TJP1/ZO1 condensates along the apical cell interface. In terms of tissue distribution, abundantly expressed in germ cells, also expressed in testes and seminiferous tubules, with faint expression in Sertoli cells (at protein level).

The protein resides in the cell junction. Its subcellular location is the tight junction. It is found in the apical cell membrane. The protein localises to the cytoplasm. It localises to the perinuclear region. Its function is as follows. Scaffolding protein that facilitates the localization of proteins to the cell membrane. Required for the correct formation of tight junctions and epithelial apico-basal polarity. Acts (via its L27 domain) as an apical connector and elongation factor for multistranded TJP1/ZO1 condensates that form a tight junction belt, thereby required for the formation of the tight junction-mediated cell barrier. Positively regulates epithelial cell microtubule elongation and cell migration, possibly via facilitating localization of PRKCI/aPKC and PAR3D/PAR3 at the leading edge of migrating cells. Plays a role in the correct reorientation of the microtubule-organizing center during epithelial migration. May regulate the surface expression and/or function of ASIC3 in sensory neurons. May recruit ARHGEF18 to apical cell-cell boundaries. The protein is InaD-like protein of Rattus norvegicus (Rat).